Reading from the N-terminus, the 391-residue chain is Inactive polyketide synthase 2 (391 aa).

Cys164 is a catalytic residue.

This sequence belongs to the thiolase-like superfamily. Chalcone/stilbene synthases family. In terms of assembly, homodimer.

The protein is Inactive polyketide synthase 2 (PKS2) of Rubus idaeus (Raspberry).